We begin with the raw amino-acid sequence, 172 residues long: Phosphopantetheine adenylyltransferase (172 aa).

Position 13 (Thr13) interacts with substrate. Residues 13 to 14 (TF) and His21 each bind ATP. Substrate contacts are provided by Lys45, Leu81, and Arg95. ATP is bound by residues 96–98 (GLR), Glu106, and 131–137 (SQFISSR).

This sequence belongs to the bacterial CoaD family. As to quaternary structure, homohexamer. The cofactor is Mg(2+).

The protein localises to the cytoplasm. It catalyses the reaction (R)-4'-phosphopantetheine + ATP + H(+) = 3'-dephospho-CoA + diphosphate. It participates in cofactor biosynthesis; coenzyme A biosynthesis; CoA from (R)-pantothenate: step 4/5. In terms of biological role, reversibly transfers an adenylyl group from ATP to 4'-phosphopantetheine, yielding dephospho-CoA (dPCoA) and pyrophosphate. This Rhodospirillum rubrum (strain ATCC 11170 / ATH 1.1.1 / DSM 467 / LMG 4362 / NCIMB 8255 / S1) protein is Phosphopantetheine adenylyltransferase.